The following is a 230-amino-acid chain: Protein CbbY (230 aa).

Aspartate 8 (nucleophile) is an active-site residue. Residues aspartate 8 and aspartate 10 each contribute to the Mg(2+) site. Aspartate 8 serves as a coordination point for substrate. Catalysis depends on aspartate 10, which acts as the Proton donor. Substrate contacts are provided by residues glutamate 17, 50–54 (GGKER), 75–78 (HRAK), and 115–121 (TTTSLPN). A Mg(2+)-binding site is contributed by aspartate 176.

The protein belongs to the HAD-like hydrolase superfamily. CbbY/CbbZ/Gph/YieH family. It depends on Mg(2+) as a cofactor.

It carries out the reaction D-xylulose 1,5-bisphosphate + H2O = D-xylulose 5-phosphate + phosphate. Its function is as follows. Highly selective xylulose-1,5-bisphosphate (XuBP) phosphatase. Also shows activity towards ribulose-1,5-bisphosphate (RuBP) and fructose-1,6-bisphosphate (FBP), but not towards fructose-6-phosphate (F6P) or ribulose-5-phosphate (Ru5P). Degrades xylulose-1,5-bisphosphate, a potent inhibitor of rubisco produced by the rubisco itself. This is Protein CbbY from Cereibacter sphaeroides (Rhodobacter sphaeroides).